The chain runs to 84 residues: Protein myomixer (84 aa).

Topologically, residues 1–4 (MPTP) are cytoplasmic. The helical transmembrane segment at 5–25 (LLPLLLRLLLSCLLLPAARLA) threads the bilayer. Residues 26 to 84 (RQYLLPLLRRLARRLGSQDMREALLGCLLFILSQRHSPDAGEASRVDRLERRERLGPQK) lie on the Extracellular side of the membrane. Residues 48–57 (ALLGCLLFIL) carry the AxLyCxL motif. The disordered stretch occupies residues 62–84 (SPDAGEASRVDRLERRERLGPQK).

Belongs to the MYMX family. Interacts with MYMK.

The protein resides in the cell membrane. Its function is as follows. Myoblast-specific protein that mediates myoblast fusion, an essential step for the formation of multi-nucleated muscle fibers. Involved in membrane fusion downstream of the lipid mixing step mediated by MYMK. Acts by generating membrane stresses via its extracellular C-terminus, leading to drive fusion pore formation. Acts independently of MYMK. Involved in skeletal muscle regeneration in response to injury by mediating the fusion of satellite cells, a population of muscle stem cells, with injured myofibers. This chain is Protein myomixer, found in Homo sapiens (Human).